The following is a 144-amino-acid chain: Superoxide dismutase [Mn], mitochondrial (144 aa).

3 residues coordinate Mn(2+): His10, His58, and Asp143.

The protein belongs to the iron/manganese superoxide dismutase family. In terms of assembly, homotetramer. Requires Mn(2+) as cofactor.

The protein resides in the mitochondrion matrix. It catalyses the reaction 2 superoxide + 2 H(+) = H2O2 + O2. Functionally, destroys superoxide anion radicals which are normally produced within the cells and which are toxic to biological systems. This is Superoxide dismutase [Mn], mitochondrial from Apostichopus californicus (California sea cucumber).